The sequence spans 350 residues: tRNA N6-adenosine threonylcarbamoyltransferase (350 aa).

Residues H113 and H117 each contribute to the Fe cation site. Residues 135–139 (LVSGG), D169, G182, D186, and N282 contribute to the substrate site. Residue D310 participates in Fe cation binding.

This sequence belongs to the KAE1 / TsaD family. Requires Fe(2+) as cofactor.

The protein localises to the cytoplasm. The catalysed reaction is L-threonylcarbamoyladenylate + adenosine(37) in tRNA = N(6)-L-threonylcarbamoyladenosine(37) in tRNA + AMP + H(+). Its function is as follows. Required for the formation of a threonylcarbamoyl group on adenosine at position 37 (t(6)A37) in tRNAs that read codons beginning with adenine. Is involved in the transfer of the threonylcarbamoyl moiety of threonylcarbamoyl-AMP (TC-AMP) to the N6 group of A37, together with TsaE and TsaB. TsaD likely plays a direct catalytic role in this reaction. This chain is tRNA N6-adenosine threonylcarbamoyltransferase, found in Corynebacterium diphtheriae (strain ATCC 700971 / NCTC 13129 / Biotype gravis).